A 61-amino-acid polypeptide reads, in one-letter code: Small ribosomal subunit protein uS14 (61 aa).

Residues C24, C27, C40, and C43 each contribute to the Zn(2+) site.

Belongs to the universal ribosomal protein uS14 family. Zinc-binding uS14 subfamily. In terms of assembly, part of the 30S ribosomal subunit. Contacts proteins S3 and S10. It depends on Zn(2+) as a cofactor.

In terms of biological role, binds 16S rRNA, required for the assembly of 30S particles and may also be responsible for determining the conformation of the 16S rRNA at the A site. The protein is Small ribosomal subunit protein uS14 of Ureaplasma parvum serovar 3 (strain ATCC 27815 / 27 / NCTC 11736).